The sequence spans 365 residues: Tetratricopeptide repeat protein 19, mitochondrial (365 aa).

Residues 1–52 constitute a mitochondrion transit peptide; it reads MFRLLRWRLGRTLLRAAGRRCGGCTARLLPERAGDAGPGAERLRTRGAPARG. TPR repeat units follow at residues 127–160, 170–203, 220–260, 269–302, and 308–341; these read TYTY…LLGG, VEIS…LEGK, ANTY…CQEI, IVLM…AREI, and HMVL…AELK.

This sequence belongs to the TTC19 family. As to quaternary structure, binds to the mature mitochondrial complex III dimer, after the incorporation of the Rieske protein UQCRFS1. Interacts with UQCRC1 and UQCRFS1. Interacts with ZFYVE26 and CHMP4B. In terms of processing, proteolytically cleaved by PARL.

The protein resides in the mitochondrion inner membrane. Functionally, required for the preservation of the structural and functional integrity of mitochondrial respiratory complex III by allowing the physiological turnover of the Rieske protein UQCRFS1. Involved in the clearance of UQCRFS1 N-terminal fragments, which are produced upon incorporation into the complex III and whose presence is detrimental for its catalytic activity. The sequence is that of Tetratricopeptide repeat protein 19, mitochondrial (Ttc19) from Rattus norvegicus (Rat).